Here is a 37-residue protein sequence, read N- to C-terminus: Large ribosomal subunit protein bL36 (37 aa).

It belongs to the bacterial ribosomal protein bL36 family.

This is Large ribosomal subunit protein bL36 from Thermobifida fusca (strain YX).